The primary structure comprises 429 residues: Histidine--tRNA ligase (429 aa).

It belongs to the class-II aminoacyl-tRNA synthetase family. Homodimer.

It localises to the cytoplasm. The enzyme catalyses tRNA(His) + L-histidine + ATP = L-histidyl-tRNA(His) + AMP + diphosphate + H(+). This Streptococcus pneumoniae serotype 4 (strain ATCC BAA-334 / TIGR4) protein is Histidine--tRNA ligase.